A 122-amino-acid chain; its full sequence is Small ribosomal subunit protein uS13 (122 aa).

The segment at 93–122 (RRGLPVRGQNTKTNARTRKGPKRTAGGKKK) is disordered. The span at 107–122 (ARTRKGPKRTAGGKKK) shows a compositional bias: basic residues.

Belongs to the universal ribosomal protein uS13 family. In terms of assembly, part of the 30S ribosomal subunit. Forms a loose heterodimer with protein S19. Forms two bridges to the 50S subunit in the 70S ribosome.

Functionally, located at the top of the head of the 30S subunit, it contacts several helices of the 16S rRNA. In the 70S ribosome it contacts the 23S rRNA (bridge B1a) and protein L5 of the 50S subunit (bridge B1b), connecting the 2 subunits; these bridges are implicated in subunit movement. Contacts the tRNAs in the A and P-sites. The polypeptide is Small ribosomal subunit protein uS13 (Syntrophomonas wolfei subsp. wolfei (strain DSM 2245B / Goettingen)).